The sequence spans 585 residues: Parathyroid hormone/parathyroid hormone-related peptide receptor (585 aa).

The signal sequence occupies residues 1–26; it reads MGAPRISHSLALLLCCSVLSSVYALV. Topologically, residues 27-185 are extracellular; it reads DADDVITKEE…REREVFDRLG (159 aa). 3 cysteine pairs are disulfide-bonded: Cys-48–Cys-114, Cys-105–Cys-145, and Cys-128–Cys-167. A disordered region spans residues 69 to 90; that stretch reads MSRSAKTKKEKPAEKLYSQAEE. 4 N-linked (GlcNAc...) asparagine glycosylation sites follow: Asn-148, Asn-158, Asn-163, and Asn-173. The chain crosses the membrane as a helical span at residues 186–209; the sequence is MIYTVGYSISLGSLTVAVLILGYF. Over 210-216 the chain is Cytoplasmic; that stretch reads RRLHCTR. Residues 217–236 form a helical membrane-spanning segment; that stretch reads NYIHMHLFVSFMLRAVSIFI. Over 237 to 276 the chain is Extracellular; it reads KDAVLYSGVSTDEIERITEEELRAFTEPPPADKAGFVGCR. Residues 277 to 300 form a helical membrane-spanning segment; that stretch reads VAVTVFLYFLTTNYYWILVEGLYL. Residues 301–314 lie on the Cytoplasmic side of the membrane; the sequence is HSLIFMAFFSEKKY. A helical membrane pass occupies residues 315–336; it reads LWGFTLFGWGLPAVFVAVWVTV. Over 337-355 the chain is Extracellular; the sequence is RATLANTECWDLSSGNKKW. A helical transmembrane segment spans residues 356–376; it reads IIQVPILAAIVVNFILFINII. Residues 377 to 403 are Cytoplasmic-facing; it reads RVLATKLRETNAGRCDTRQQYRKLLKS. A helical membrane pass occupies residues 404-422; sequence TLVLMPLFGVHYIVFMATP. Residues 423–434 are Extracellular-facing; it reads YTEVSGILWQVQ. Residues 435-457 form a helical membrane-spanning segment; the sequence is MHYEMLFNSFQGFFVAIIYCFCN. At 458–585 the chain is on the cytoplasmic side; it reads GEVQAEIKKS…LLEEERETVM (128 aa). The Important for interaction with G proteins signature appears at 468 to 471; the sequence is WSRW. A disordered region spans residues 531 to 585; that stretch reads PGYVKHGSISENSLPSSGPEPGTKDDGYLNGSGLYEPMVGEQPPPLLEEERETVM.

It belongs to the G-protein coupled receptor 2 family. As to quaternary structure, homodimer in the absence of bound ligand. Peptide hormone binding leads to dissociation of the homodimer. In terms of processing, N-glycosylated.

It is found in the cell membrane. Functionally, G-protein-coupled receptor for parathyroid hormone (PTH) and for parathyroid hormone-related peptide (PTHLH). Ligand binding causes a conformation change that triggers signaling via guanine nucleotide-binding proteins (G proteins) and modulates the activity of downstream effectors, such as adenylate cyclase (cAMP). PTH1R is coupled to G(s) G alpha proteins and mediates activation of adenylate cyclase activity. PTHLH dissociates from PTH1R more rapidly than PTH; as consequence, the cAMP response induced by PTHLH decays faster than the response induced by PTH. This chain is Parathyroid hormone/parathyroid hormone-related peptide receptor (PTH1R), found in Didelphis virginiana (North American opossum).